We begin with the raw amino-acid sequence, 1237 residues long: uncharacterized protein (1237 aa).

The region spanning 591–712 (KDMLEIYSDL…IVLSKYTQWT (122 aa)) is the MHD1 domain. The region spanning 786 to 906 (LIEALDVAES…GDYLPREEWF (121 aa)) is the C2 domain. An MHD2 domain is found at 1014–1130 (EAAIYELLDY…KPTDFLLQEC (117 aa)).

This is an uncharacterized protein from Schizosaccharomyces pombe (strain 972 / ATCC 24843) (Fission yeast).